We begin with the raw amino-acid sequence, 152 residues long: Erythema protein SVEP (152 aa).

Residues 1-18 (MSITQSFFVLTLAIFGAA) form the signal peptide.

In terms of tissue distribution, salivary gland (at protein level).

It is found in the secreted. In terms of biological role, salivary vasoactive peptide; induces vasodilatation in bioassay with rabbit aortic rings. The chain is Erythema protein SVEP from Simulium vittatum (Striped black fly).